Consider the following 327-residue polypeptide: Cysteine synthase (327 aa).

The residue at position 65 (Lys-65) is an N6-(pyridoxal phosphate)lysine. Pyridoxal 5'-phosphate-binding positions include Asn-95, 200–204 (GTGGT), and Ser-282.

This sequence belongs to the cysteine synthase/cystathionine beta-synthase family. Pyridoxal 5'-phosphate is required as a cofactor.

It catalyses the reaction O-acetyl-L-serine + hydrogen sulfide = L-cysteine + acetate. It participates in amino-acid biosynthesis; L-cysteine biosynthesis; L-cysteine from L-serine: step 2/2. This is Cysteine synthase (cysM) from Aquifex aeolicus (strain VF5).